The following is a 59-amino-acid chain: Large ribosomal subunit protein uL30 (59 aa).

It belongs to the universal ribosomal protein uL30 family. In terms of assembly, part of the 50S ribosomal subunit.

The protein is Large ribosomal subunit protein uL30 of Listeria welshimeri serovar 6b (strain ATCC 35897 / DSM 20650 / CCUG 15529 / CIP 8149 / NCTC 11857 / SLCC 5334 / V8).